The chain runs to 107 residues: DNA-directed RNA polymerase subunit omega (107 aa).

This sequence belongs to the RNA polymerase subunit omega family. As to quaternary structure, the RNAP catalytic core consists of 2 alpha, 1 beta, 1 beta' and 1 omega subunit. When a sigma factor is associated with the core the holoenzyme is formed, which can initiate transcription.

The enzyme catalyses RNA(n) + a ribonucleoside 5'-triphosphate = RNA(n+1) + diphosphate. In terms of biological role, promotes RNA polymerase assembly. Latches the N- and C-terminal regions of the beta' subunit thereby facilitating its interaction with the beta and alpha subunits. This chain is DNA-directed RNA polymerase subunit omega, found in Oenococcus oeni (strain ATCC BAA-331 / PSU-1).